Consider the following 509-residue polypeptide: MEEFQRSLQLARSHEHDFLYPLIFQEYIYALAHNHVLNRSISSLLETKGSDNKSSLLIVKRLIPRMYQQNYLIIPENDSNQNPFGGRNNNLYSQMISEGFAVIVEIPFSLRLLAFLEGNEQERLKWKNLRSIHSTFPFLEDSFSHFNYVLDILIPHPVHLEILVQILRYWVKDTSSLHLLRFYLYQSHNWNSLITPKKSSSFFSKRNKRFFFFLYNSHVRESESIFVFLCNQSSHLRSLSSEDLLERIYFYGKIERLIEVFANAFPVMTLRLFKDPFMHYVRYQGKSILGSKGTSLLMNKWKYYLVHLWQCHFYLWSPPGRIYRTQLPNHSLDFMGYFSSVRLNPSTIRSQMLENAFLIANAIRNFETVVPILHLIASLAKAKFCNVFGYPISKPVWADLSDSDIIDRFGRICRNLSHYYSGSSQKKSLYQIKYILRLSCARTLARKHKMSVRVFLKRFDSELLEEFLTAEEQVLSLTFSRASSAFLGLDRGRVWYLDIFCINDRASHE.

Belongs to the intron maturase 2 family. MatK subfamily.

It localises to the plastid. The protein localises to the chloroplast. Usually encoded in the trnK tRNA gene intron. Probably assists in splicing its own and other chloroplast group II introns. This is Maturase K from Eucommia ulmoides (Hardy rubber tree).